The sequence spans 737 residues: O-GlcNAcase BT_4395 (737 aa).

An N-terminal signal peptide occupies residues 1–21; it reads MKNNKIYLLGACLLCAVTTFA. The catalytic domain stretch occupies residues 148–433; the sequence is VRYRGVVEGF…WKDAIRTILP (286 aa). Residues 149-416 enclose the GH84 domain; sequence RYRGVVEGFY…SVASYAWNPA (268 aa). A protein contacts are provided by G156, K187, and D263. Residue D264 is the Proton donor of the active site. A protein is bound by residues Y303, 358–360, D365, and N393; that span reads WWN.

This sequence belongs to the glycosyl hydrolase 84 family. In terms of assembly, homodimer.

It carries out the reaction 3-O-(N-acetyl-beta-D-glucosaminyl)-L-seryl-[protein] + H2O = N-acetyl-D-glucosamine + L-seryl-[protein]. The catalysed reaction is 3-O-(N-acetyl-beta-D-glucosaminyl)-L-threonyl-[protein] + H2O = L-threonyl-[protein] + N-acetyl-D-glucosamine. Inhibited by 1,2-dideoxy-2'-methyl-alpha-D-glucopyranoso-[2,1-d]-delta 2'-thiazoline (NAG-thiazoline) and O-(2-acetamido-2-deoxy-D-glucopyranosylidene)amino-N-phenyl-carbamate (PUGNAc). Not inhibited by Streptozotocin. In terms of biological role, can hydrolyze the glycosidic link of O-GlcNAcylated proteins. Can use p-nitrophenyl-beta-GlcNAc and 4-methylumbelliferone-GlcNAc as substrates (in vitro). This Bacteroides thetaiotaomicron (strain ATCC 29148 / DSM 2079 / JCM 5827 / CCUG 10774 / NCTC 10582 / VPI-5482 / E50) protein is O-GlcNAcase BT_4395.